We begin with the raw amino-acid sequence, 67 residues long: Potassium channel toxin alpha-KTx 6.16 (67 aa).

Residues 1-24 form the signal peptide; sequence MNLKLALVLLLTVINVGMLPGATS. Cystine bridges form between Cys34–Cys55, Cys40–Cys60, Cys44–Cys62, and Cys50–Cys65.

The protein belongs to the short scorpion toxin superfamily. Potassium channel inhibitor family. Alpha-KTx 06 subfamily. Expressed by the venom gland.

The protein resides in the secreted. Its function is as follows. Inhibits voltage-gated potassium channels. This is Potassium channel toxin alpha-KTx 6.16 from Opisthacanthus cayaporum (South American scorpion).